The following is a 203-amino-acid chain: V-type ATP synthase subunit D (203 aa).

It belongs to the V-ATPase D subunit family.

In terms of biological role, produces ATP from ADP in the presence of a proton gradient across the membrane. The sequence is that of V-type ATP synthase subunit D from Streptococcus pneumoniae (strain Hungary19A-6).